The chain runs to 431 residues: Protein PIN-LIKES 6 (431 aa).

Residues 1 to 29 lie on the Lumenal side of the membrane; sequence MIARILAALADSMEMPVAAGGGSVLGTIK. A helical transmembrane segment spans residues 30 to 50; it reads IAVMPIAKVFTMCFLGLLMAS. The Cytoplasmic portion of the chain corresponds to 51–66; it reads KYVNILPPSGRKLLNG. Residues 67 to 87 traverse the membrane as a helical segment; the sequence is LVFSLLLPCLIFSQLGQAVTL. At 88–93 the chain is on the lumenal side; the sequence is QKMLQW. Residues 94 to 114 traverse the membrane as a helical segment; the sequence is WFIPVNVVLGTISGSIIGFIV. The Cytoplasmic segment spans residues 115–128; it reads ASIVRPPYPYFKFT. Residues 129–149 form a helical membrane-spanning segment; the sequence is IIQIGVGNIGNVPLVLLAALC. Over 150 to 169 the chain is Lumenal; that stretch reads RDTSNPFGDSEKCSIDGTAY. The helical transmembrane segment at 170–190 threads the bilayer; the sequence is ISFGQWVGAIILYTYVYQMFA. Topologically, residues 191 to 268 are cytoplasmic; the sequence is PPPEGFDAEE…FLYEKLKLKQ (78 aa). The chain crosses the membrane as a helical span at residues 269–289; the sequence is IVQPAIVASILAMILGAIPFT. The Lumenal portion of the chain corresponds to 290–306; that stretch reads KKLIFTNGAPLFFFTDS. The chain crosses the membrane as a helical span at residues 307–327; sequence CMILGDAMIPCILLALGGNLI. The Cytoplasmic portion of the chain corresponds to 328–340; it reads NGPGSSKLGFKTT. A helical transmembrane segment spans residues 341–361; it reads AAIIIGRLVLVPPVGLGIVTV. Over 362–376 the chain is Lumenal; it reads ADKLGFLPADDKMFR. The chain crosses the membrane as a helical span at residues 377 to 397; sequence FVLLLQHTMPTSVLSGAVANL. Residues 398–406 are Cytoplasmic-facing; the sequence is RGCGRESAA. A helical transmembrane segment spans residues 407-427; that stretch reads VLFWVHIFAIFSMAGWMVLYI. Topologically, residues 428–431 are lumenal; it reads NILF.

Belongs to the auxin efflux carrier (TC 2.A.69.2) family. Expressed in seedlings, rosette and cauline leaves, stems and flowers.

Its subcellular location is the endoplasmic reticulum membrane. Involved in cellular auxin homeostasis by regulating auxin metabolism. Regulates intracellular auxin accumulation at the endoplasmic reticulum and thus auxin availability for nuclear auxin signaling. In Arabidopsis thaliana (Mouse-ear cress), this protein is Protein PIN-LIKES 6.